The sequence spans 817 residues: General transcription factor 3C polypeptide 4 (817 aa).

M1 is modified (N-acetylmethionine). Positions 1–40 are disordered; sequence MSEADQALVGPKADEPSPPAEEKDEGGGKEAAADAAPGPS. K221 is covalently cross-linked (Glycyl lysine isopeptide (Lys-Gly) (interchain with G-Cter in SUMO2)). A phosphoserine mark is found at S600 and S607. The segment at 603-658 is disordered; the sequence is LLVDSPGMGDGEDEQQEEGTSKQGTKAGLQEKSKEGDTEETPEDSLTAGGDTGGRE. K624 is covalently cross-linked (Glycyl lysine isopeptide (Lys-Gly) (interchain with G-Cter in SUMO2)). Position 647 is a phosphoserine (S647).

This sequence belongs to the TFIIIC subunit 4 family. In terms of assembly, part of the TFIIIC subcomplex TFIIIC2, consisting of six subunits, GTF3C1, GTF3C2, GTF3C3, GTF3C4, GTF3C5 and GTF3C6. Interacts with BRF1, GTF3C1, GTF3C2, GTF3C5, GTF3C6, POLR3C and POLR3F.

The protein resides in the nucleus. The catalysed reaction is L-lysyl-[protein] + acetyl-CoA = N(6)-acetyl-L-lysyl-[protein] + CoA + H(+). In terms of biological role, essential for RNA polymerase III to make a number of small nuclear and cytoplasmic RNAs, including 5S RNA, tRNA, and adenovirus-associated (VA) RNA of both cellular and viral origin. Has histone acetyltransferase activity (HAT) with unique specificity for free and nucleosomal H3. May cooperate with GTF3C5 in facilitating the recruitment of TFIIIB and RNA polymerase through direct interactions with BRF1, POLR3C and POLR3F. May be localized close to the A box. The polypeptide is General transcription factor 3C polypeptide 4 (Gtf3c4) (Mus musculus (Mouse)).